Reading from the N-terminus, the 240-residue chain is Urease accessory protein UreD (240 aa).

It belongs to the UreD family. In terms of assembly, ureD, UreF and UreG form a complex that acts as a GTP-hydrolysis-dependent molecular chaperone, activating the urease apoprotein by helping to assemble the nickel containing metallocenter of UreC. The UreE protein probably delivers the nickel.

The protein localises to the cytoplasm. Functionally, required for maturation of urease via the functional incorporation of the urease nickel metallocenter. The protein is Urease accessory protein UreD of Granulibacter bethesdensis (strain ATCC BAA-1260 / CGDNIH1).